The chain runs to 399 residues: Tetracycline resistance protein, class A (399 aa).

12 helical membrane-spanning segments follow: residues 7 to 29 (LIVI…PVLP), 44 to 66 (HYGI…LGAL), 73 to 95 (RPVL…TAPF), 99 to 121 (LYIG…AYIA), 133 to 155 (FGFM…GLMG), 160 to 182 (HAPF…FLLP), 203 to 225 (FRWA…MQLV), 245 to 267 (ATTI…AMIT), 279 to 298 (ALML…AFAT), 302 to 324 (MAFP…QAML), 336 to 358 (LQGS…FTAI), and 368 to 390 (GWAW…RGLW).

It belongs to the major facilitator superfamily. TCR/Tet family.

Its subcellular location is the cell inner membrane. Its function is as follows. Resistance to tetracycline by an active tetracycline efflux. This is an energy-dependent process that decreases the accumulation of the antibiotic in whole cells. This protein functions as a metal-tetracycline/H(+) antiporter. The chain is Tetracycline resistance protein, class A (tetA) from Escherichia coli.